The sequence spans 332 residues: Biotin synthase (332 aa).

Residues Y47 to A273 form the Radical SAM core domain. [4Fe-4S] cluster-binding residues include C65, C69, and C72. [2Fe-2S] cluster contacts are provided by C109, C141, C201, and R271.

The protein belongs to the radical SAM superfamily. Biotin synthase family. In terms of assembly, homodimer. It depends on [4Fe-4S] cluster as a cofactor. [2Fe-2S] cluster is required as a cofactor.

It catalyses the reaction (4R,5S)-dethiobiotin + (sulfur carrier)-SH + 2 reduced [2Fe-2S]-[ferredoxin] + 2 S-adenosyl-L-methionine = (sulfur carrier)-H + biotin + 2 5'-deoxyadenosine + 2 L-methionine + 2 oxidized [2Fe-2S]-[ferredoxin]. It participates in cofactor biosynthesis; biotin biosynthesis; biotin from 7,8-diaminononanoate: step 2/2. Functionally, catalyzes the conversion of dethiobiotin (DTB) to biotin by the insertion of a sulfur atom into dethiobiotin via a radical-based mechanism. The polypeptide is Biotin synthase (Geobacillus thermodenitrificans (strain NG80-2)).